The chain runs to 175 residues: 3-hydroxydecanoyl-[acyl-carrier-protein] dehydratase (175 aa).

H71 is an active-site residue.

Belongs to the thioester dehydratase family. FabA subfamily. Homodimer.

The protein resides in the cytoplasm. It carries out the reaction a (3R)-hydroxyacyl-[ACP] = a (2E)-enoyl-[ACP] + H2O. The enzyme catalyses (3R)-hydroxydecanoyl-[ACP] = (2E)-decenoyl-[ACP] + H2O. It catalyses the reaction (2E)-decenoyl-[ACP] = (3Z)-decenoyl-[ACP]. Its pathway is lipid metabolism; fatty acid biosynthesis. Its function is as follows. Necessary for the introduction of cis unsaturation into fatty acids. Catalyzes the dehydration of (3R)-3-hydroxydecanoyl-ACP to E-(2)-decenoyl-ACP and then its isomerization to Z-(3)-decenoyl-ACP. Can catalyze the dehydratase reaction for beta-hydroxyacyl-ACPs with saturated chain lengths up to 16:0, being most active on intermediate chain length. This Rhodopseudomonas palustris (strain BisB5) protein is 3-hydroxydecanoyl-[acyl-carrier-protein] dehydratase.